The following is a 121-amino-acid chain: HTH-type transcriptional regulator Rv1152 (121 aa).

The 69-residue stretch at 15-83 (KPLFDQLRTQ…GRFGTFISRF (69 aa)) folds into the HTH gntR-type domain. A DNA-binding region (H-T-H motif) is located at residues 43–62 (VRDLAGQLGVAANTVARAYR).

It localises to the cytoplasm. Its subcellular location is the secreted. It is found in the cell wall. Transcriptional regulator that modulates resistance to vancomycin and aminoglycosides. Negatively regulates the expression of several genes responsive to vancomycin, resulting in decreased susceptibility of bacteria to vancomycin. Negatively regulates the expression of genes encoding the ribosome binding protein Hsp, the small subunit of sulfate adenylyltransferase CysD, the L-lysine-epsilon aminotransferase LAT and the protease HtpX. Also modulates purine metabolism and aminoglycoside antibiotic resistance. Negatively regulates the expression of purine metabolism-related genes and the accumulation of purine metabolites, which affects aminoglycoside antibiotic resistance. The sequence is that of HTH-type transcriptional regulator Rv1152 from Mycobacterium tuberculosis (strain ATCC 25618 / H37Rv).